Here is a 238-residue protein sequence, read N- to C-terminus: Protein shisa-3 homolog (238 aa).

A signal peptide spans 1 to 21 (MGALLAFCLLVGLLRWGPAGA). Residues 22–98 (QQPGEYCHGW…GITAQPVYVP (77 aa)) lie on the Lumenal side of the membrane. The helical transmembrane segment at 99 to 119 (FLIVGSIFIAFIILGSLVAIY) threads the bilayer. Residues 120-238 (CCTCLRPKEP…GKSCPDFSSS (119 aa)) are Cytoplasmic-facing.

Belongs to the shisa family.

Its subcellular location is the endoplasmic reticulum membrane. Functionally, plays an essential role in the maturation of presomitic mesoderm cells by individual attenuation of both FGF and WNT signaling. This Mus musculus (Mouse) protein is Protein shisa-3 homolog (Shisa3).